The chain runs to 248 residues: Protein maestro (248 aa).

Residues 1–21 form a disordered region; it reads MDQRQRRILGQPLSIPTSQPK. One copy of the HEAT repeat lies at 128–163; that stretch reads SFFIDITLQTRTLLDDENDSLRYSAFVLFGQLAAFA.

In terms of tissue distribution, ubiquitous.

The protein resides in the nucleus. It localises to the nucleolus. This Homo sapiens (Human) protein is Protein maestro (MRO).